A 237-amino-acid chain; its full sequence is ATP-dependent dethiobiotin synthetase BioD (237 aa).

Residue 12–17 (DAGKTL) coordinates ATP. Thr-16 is a binding site for Mg(2+). Residue Lys-37 is part of the active site. A substrate-binding site is contributed by Ser-41. ATP is bound by residues Asp-54, 116–119 (EGAG), and 213–215 (PRL). Mg(2+)-binding residues include Asp-54 and Glu-116.

This sequence belongs to the dethiobiotin synthetase family. Homodimer. The cofactor is Mg(2+).

It localises to the cytoplasm. The enzyme catalyses (7R,8S)-7,8-diammoniononanoate + CO2 + ATP = (4R,5S)-dethiobiotin + ADP + phosphate + 3 H(+). It functions in the pathway cofactor biosynthesis; biotin biosynthesis; biotin from 7,8-diaminononanoate: step 1/2. Functionally, catalyzes a mechanistically unusual reaction, the ATP-dependent insertion of CO2 between the N7 and N8 nitrogen atoms of 7,8-diaminopelargonic acid (DAPA, also called 7,8-diammoniononanoate) to form a ureido ring. The sequence is that of ATP-dependent dethiobiotin synthetase BioD from Chromohalobacter salexigens (strain ATCC BAA-138 / DSM 3043 / CIP 106854 / NCIMB 13768 / 1H11).